The primary structure comprises 178 residues: MNKPTKLFSTLALAAGMTAAAAGGAGTIHAQQPETTVSIDDLYSYPIDSYLVSAEALNVRTKPSASSQKADTLHLGDSLKLISFSNADWAKVKYKNGKTGFVSTHYIVKAATTVKTKTKTKVYTSADGKSIKTLPADTSVSFLGWSKTNKGGFDFDWVFVDYGGTTGYMKTKDLHMTK.

The first 30 residues, 1 to 30 (MNKPTKLFSTLALAAGMTAAAAGGAGTIHA), serve as a signal peptide directing secretion. SH3b domains are found at residues 47-111 (IDSY…VKAA) and 116-178 (TKTK…HMTK).

Its subcellular location is the secreted. It localises to the cell wall. Increases in stationary phase in a strain lacking the WprA protease. This chain is Cell wall-binding protein YwsB (ywsB), found in Bacillus subtilis (strain 168).